Consider the following 481-residue polypeptide: UDP-glycosyltransferase 88F3 (481 aa).

Residues serine 288, 357–358 (WA), 375–383 (HCGWNSVLE), and 397–400 (YAEQ) contribute to the UDP-alpha-D-glucose site.

The protein belongs to the UDP-glycosyltransferase family.

Glycosyltransferase that may possess chalcone and dihydrochalcone 2'-O-glucosyltransferase activity. In Pyrus communis (Pear), this protein is UDP-glycosyltransferase 88F3.